We begin with the raw amino-acid sequence, 352 residues long: MASMNFSPPEYPDYGTATLDPNIFVDESLNTPKLSVPDMIALVIFVMVFLVGVPGNFLVVWVTGFEVRRTINAIWFLNLAVADLLSCLALPILFSSIVQQGYWPFGNAACRILPSLILLNMYASILLLTTISADRFVLVFNPIWCQNYRGPQLAWAACSVAWAVALLLTVPSFIFRGVHTEYFPFWMTCGVDYSGVGVLVERGVAILRLLMGFLGPLVILSICYTFLLIRTWSRKATRSTKTLKVVVAVVVSFFVLWLPYQVTGMMMALFYKHSESFRRVSRLDSLCVAVAYINCCINPIIYVLAAQGFHSRFLKSLPARLRQVLAEESVGRDSKSITLSTVDTPAQKSQGV.

Residues methionine 1–aspartate 38 are Extracellular-facing. 2 positions are modified to sulfotyrosine: tyrosine 11 and tyrosine 14. A helical transmembrane segment spans residues methionine 39–phenylalanine 65. Residues glutamate 66–threonine 70 lie on the Cytoplasmic side of the membrane. Residues isoleucine 71–phenylalanine 94 traverse the membrane as a helical segment. At serine 95–arginine 111 the chain is on the extracellular side. An intrachain disulfide couples cysteine 110 to cysteine 189. The chain crosses the membrane as a helical span at residues isoleucine 112–alanine 133. At aspartate 134–alanine 154 the chain is on the cytoplasmic side. The helical transmembrane segment at tryptophan 155 to phenylalanine 175 threads the bilayer. At arginine 176–arginine 202 the chain is on the extracellular side. Residues glycine 203–leucine 228 traverse the membrane as a helical segment. Residues isoleucine 229–lysine 244 are Cytoplasmic-facing. Residues valine 245–methionine 267 traverse the membrane as a helical segment. Residues alanine 268–aspartate 284 lie on the Extracellular side of the membrane. A helical transmembrane segment spans residues serine 285–alanine 305. Over alanine 306–valine 352 the chain is Cytoplasmic. A phosphoserine mark is found at serine 316, serine 329, serine 334, serine 336, and serine 340.

Belongs to the G-protein coupled receptor 1 family. As to quaternary structure, homodimer. May also form higher-order oligomers. Interacts (when phosphorylated) with ARRB1 and ARRB2; the interaction is associated with internalization of C5aR. Post-translationally, sulfation plays a critical role in the association of C5aR with C5a, but no significant role in the ability of the receptor to transduce a signal and mobilize calcium in response to a small peptide agonist. Phosphorylated on serine residues in response to C5a binding, resulting in internalization of the receptor and short-term desensitization to C5a.

Its subcellular location is the cell membrane. It localises to the cytoplasmic vesicle. Functionally, receptor for the chemotactic and inflammatory peptide anaphylatoxin C5a. The ligand interacts with at least two sites on the receptor: a high-affinity site on the extracellular N-terminus, and a second site in the transmembrane region which activates downstream signaling events. Receptor activation stimulates chemotaxis, granule enzyme release, intracellular calcium release and superoxide anion production. This chain is C5a anaphylatoxin chemotactic receptor 1 (C5AR1), found in Canis lupus familiaris (Dog).